We begin with the raw amino-acid sequence, 402 residues long: Pyridinium-3,5-bisthiocarboxylic acid mononucleotide nickel insertion protein (402 aa).

Belongs to the LarC family.

It carries out the reaction Ni(II)-pyridinium-3,5-bisthiocarboxylate mononucleotide = pyridinium-3,5-bisthiocarboxylate mononucleotide + Ni(2+). In terms of biological role, involved in the biosynthesis of a nickel-pincer cofactor ((SCS)Ni(II) pincer complex). Binds Ni(2+), and functions in nickel delivery to pyridinium-3,5-bisthiocarboxylic acid mononucleotide (P2TMN), to form the mature cofactor. Is thus probably required for the activation of nickel-pincer cofactor-dependent enzymes. This chain is Pyridinium-3,5-bisthiocarboxylic acid mononucleotide nickel insertion protein, found in Thermotoga sp. (strain RQ2).